A 618-amino-acid polypeptide reads, in one-letter code: Ubiquitin carboxyl-terminal hydrolase 2 (618 aa).

The necessary for interaction with MDM4 stretch occupies residues 1 to 213 (MSQLSSTLKR…RSEYLTDYLE (213 aa)). Disordered stretches follow at residues 54 to 112 (VSPT…GGSG) and 246 to 274 (RYTL…MNSK). Over residues 90–100 (KRSESQTRGNE) the composition is skewed to basic and acidic residues. Polar residues predominate over residues 255–274 (GQASGPSRSTSPGRDTMNSK). Residues 280–612 (AGLRNLGNTC…DAYLLFYELA (333 aa)) form the USP domain. The active-site Nucleophile is the C289. The interval 416 to 516 (YLEREDSRIG…FPKILVLHLK (101 aa)) is necessary for interaction with MDM4. Zn(2+)-binding residues include C438, C441, C489, and C492. H570 functions as the Proton acceptor in the catalytic mechanism.

Belongs to the peptidase C19 family. USP2 subfamily. As to quaternary structure, homooligomer. Found in trimeric complex with MDM2 and MDM4 and USP2. Interacts with CCND1; the interaction is direct and promotes its stabilization by antagonizing ubiquitin-dependent degradation. Interacts (via N-terminus and C-terminus) with MDM2. Interacts with MDM4. Interacts with PER1. Interacts with KCNQ1; counteracts the NEDD4L-specific down-regulation of I(Ks) and restores plasma membrane localization of KCNQ1. Isoform 4: Interacts with NHERF4 and CLTC. As to expression, expressed in mesangial cells of the kidney. Isoform 1 and isoform 2 are expressed in elongated spermatids; the shorter form appearing earlier than the longer form (at protein level). Isoform 1 and isoform 2 are expressed in early round spermatids of the testis. Isoform 1 is expressed in muscle and heart. Isoform 2 is expressed in muscle, lung, heart, brain, liver and ovary. During muscle differentiation, isoform 1 expression increases before the onset of membrane fusion and decreases as the myogenic processes proceeded; un counterpart, isoform 2 expression remains low until the burst of membrane fusion but increases thereafter.

It localises to the cytoplasm. It is found in the perinuclear region. Its subcellular location is the nucleus. The protein resides in the membrane. The catalysed reaction is Thiol-dependent hydrolysis of ester, thioester, amide, peptide and isopeptide bonds formed by the C-terminal Gly of ubiquitin (a 76-residue protein attached to proteins as an intracellular targeting signal).. Its activity is regulated as follows. Cleavage is inhibited by ubiquitin in a dosage-dependent manner. Cleavage is blocked by ubiquitin aldehyde. Functionally, hydrolase that deubiquitinates polyubiquitinated target proteins such as MDM2, MDM4 and CCND1. Isoform 1 and isoform 2 possess both ubiquitin-specific peptidase and isopeptidase activities. Deubiquitinates MDM2 without reversing MDM2-mediated p53/TP53 ubiquitination and thus indirectly promotes p53/TP53 degradation and limits p53 activity. Has no deubiquitinase activity against p53/TP53. Prevents MDM2-mediated degradation of MDM4. Plays a role in the G1/S cell-cycle progression in normal and cancer cells. Regulates the circadian clock by modulating its intrinsic circadian rhythm and its capacity to respond to external cues. Associates with clock proteins and deubiquitinates core clock component PER1 but does not affect its overall stability. Regulates the nucleocytoplasmic shuttling and nuclear retention of PER1 and its repressive role on the clock transcription factors CLOCK and BMAL1. Plays a role in the regulation of myogenic differentiation of embryonic muscle cells. Circadian clock output effector that regulates Ca(2+) absorption in the small intestine. Probably functions by regulating protein levels of the membrane scaffold protein NHERF4 in a rhythmic manner, and is therefore likely to control Ca(2+) membrane permeability mediated by the Ca(2+) channel TRPV6 in the intestine. The sequence is that of Ubiquitin carboxyl-terminal hydrolase 2 (Usp2) from Rattus norvegicus (Rat).